Here is a 1495-residue protein sequence, read N- to C-terminus: MSLLWVFYQNNVQKLNLSNLPSSHPVTIGPDVKDSVTISTIPFNSGVISLKRKESGGQYEVFLGNDCLGTIETDISFTLQTDQQDIRLILTGSEPEKSVYFTGNRDEIVCSSEKTNADIYLNPQDFAFAEQSTFSLLRAGGSWSVRPESGTIFLNGEKINANTPLKPGDEIFWNFTQMRVTEQDLLEIVHYAQFETALTETVKPSTEMQKKYPQYRRTPRMVYDLPDDRVSFSFPSQESDQTNRGLWLVILPPLVMLIVMGVVAIIQPRGIFILVSLAMFMMTLITSTVQYFRDKNQRKKREEKRERVYKLYLDNKRKELQALAEKQKQVLEFHFPSFEQMKYLTSEISDRIWEKSLESKDYLQLRLGTGTVPSSYEINMSGGDLANRDIDDLMEKSQHMQRVYKDIRNAPVTVDLAEGPMGLVGKSQIVKNEIHQLIGQLSFFNSYHDLRFVFIFHEEEYKDWEWMKWLPQFQMPHIYAKGFIYNEQTRDQLLSSLYELIRERDLEDDKEKLQFKPHFVFVITNQQLISEHVILEYLEGQHEHLGISTIVAAETKESLSENITTLVRYINEHEGDILIQKKKAVRIPFRLDHHQREDNERFSRTLRTLNHQVGITNSIPETVSFLELFHAKEVKEIGIQQRWLTSESSKSLSVPIGYKGKDDIVYLNLHEKAHGPHGLLAGTTGSGKSEFLQTYILSLAVHFHPHEAAFLLIDYKGGGMAQPFRNIPHLLGTITNIEGSKNFSMRALASIKSELKKRQRLFDQYQVNHINDYTKLYKQGKAEVAMPHLFLISDEFAELKSEEPDFIRELVSAARIGRSLGVHLILATQKPGGIIDDQIWSNSRFKVALKVQDATDSKEILKNSDAANITVTGRGYLQVGNNEVYELFQSAWSGAPYLEEVYGTEDEIAIVTDTGLIPLSEVDTEDNAKKDVQTEIEAVVDEIERIQDEMGIEKLPSPWLPPLAERIPRTLFPSNEKDHFHFAYVDEPDLQRQAPIAYKMMEDGNIGIFGSSGYGKSIAAATFLMSFADVYTPEELHVYIFDFGNGTLLPLAKLPHTADYFLMDQSRKIEKFMIRIKEEIDRRKRLFREKEISHIKMYNALSEEELPFIFITIDNFDIVKDEMHELESEFVQLSRDGQSLGIYFMLTATRVNAVRQSLLNNLKTKIVHYLMDQSEGYSIYGRPKFNLEPIPGRVIIQKEELYFAQMFLPVDADDDIGMFNELKSDVQKLQGRFASMEQPAPIPMLPESLSTRELSIRFKLERKPLSVPIGLHEETVSPVYFDLGKHKHCLILGQTQRGKTNVLKVMLEHLIDDETEMIGLFDSIDRGLSHYAKESDVSYLETKEDIEQWIETAEDIFKTREAMYVEAVRQGDAQNLRFSQVVLMIDGITRFQQTIDTRIQDRLANFMKSYAHLGFSFIPGGNHSEFSKGYDSLTTEMKQIRHAILLMKKSEQNVIPLPYQRQEPEIQPGFGYVVENGKEQKVQIPLCSAERESAR.

Transmembrane regions (helical) follow at residues 246 to 266 (LWLVILPPLVMLIVMGVVAII) and 270 to 290 (GIFILVSLAMFMMTLITSTVQ). FtsK domains lie at 661–858 (KDDI…TDSK) and 993–1177 (QAPI…SEGY). Residues 682 to 689 (GTTGSGKS) and 1010 to 1017 (GSSGYGKS) each bind ATP.

It belongs to the EssC family.

Its subcellular location is the cell membrane. Required for YukE secretion. Probable component or regulator of the ESX/ESAT-6-like secretion system (BsEss). This chain is ESX secretion system protein YukB (yukB), found in Bacillus subtilis (strain 168).